Reading from the N-terminus, the 241-residue chain is Platelet-derived growth factor subunit B (241 aa).

The signal sequence occupies residues 1–20; that stretch reads MNRCWALFLSLCCYLRLVSA. Residues 21 to 81 constitute a propeptide, removed in mature form; that stretch reads EGDPIPEELY…ELESLSRGRR (61 aa). N63 is a glycosylation site (N-linked (GlcNAc...) asparagine). 3 disulfides stabilise this stretch: C97/C141, C130/C178, and C134/C180. The propeptide at 191–241 is removed in mature form; the sequence is TPGSSQEQRAARTPQTRVTIRTVRVRRPPKGKHRKFKHTHDKTALKETLGA. Over residues 217–230 the composition is skewed to basic residues; that stretch reads RPPKGKHRKFKHTH. Residues 217 to 241 are disordered; the sequence is RPPKGKHRKFKHTHDKTALKETLGA.

This sequence belongs to the PDGF/VEGF growth factor family. In terms of assembly, antiparallel homodimer; disulfide-linked. Antiparallel heterodimer with PDGFA; disulfide-linked. The PDGFB homodimer interacts with PDGFRA and PDGFRB homodimers, and with heterodimers formed by PDGFRA and PDGFRB. The heterodimer composed of PDGFA and PDGFB interacts with PDGFRB homodimers, and with heterodimers formed by PDGFRA and PDGFRB. Interacts with XLKD1. Interacts with LRP1. Interacts with SORL1 (via the N-terminal ectodomain). Interacts with CD82; this interaction inhibits PDGFB-mediated signaling pathway.

The protein resides in the secreted. Its function is as follows. Growth factor that plays an essential role in the regulation of embryonic development, cell proliferation, cell migration, survival and chemotaxis. Potent mitogen for cells of mesenchymal origin. Required for normal proliferation and recruitment of pericytes and vascular smooth muscle cells in the central nervous system, skin, lung, heart and placenta. Required for normal blood vessel development, and for normal development of kidney glomeruli. Plays an important role in wound healing. Signaling is modulated by the formation of heterodimers with PDGFA. This Ovis aries (Sheep) protein is Platelet-derived growth factor subunit B (PDGFB).